The chain runs to 884 residues: MMPVAGLLLCVTAVLCTSALGAGPRLDNGKLYRYSYSTEVGLNRPTGSPGGNVGFRISSDVDINLAWRNPEIQDEQLLQVKISNIQVESAGKHSRKNNIFHGSSAESILGKVRLEALQRPFLVLWKMGKIRSLYAQKAEPATVKNLKRGVASMLMMQLKSGKMSEADASGKCLVEYKVNKHQVIRTKHLETCKSQETGFTTHSPVLGISGKCAAETVITLENGIIKSADAKETHVLSINARHKAATKVLSRQSLTLKAIEAGPAEVAGKDVAGVVKALDDKFLSVGVIVEKTKPKCKGCPNLMETWKAVRSQLEPNSLSKAEAPRSFLTLVHSLRKSSKSEILTVLQNCSKTALPQLVDAVTSAQTPSSLSAILEFLDFSKKDGLILQERFLYACGFASHPTESMLQSLLEVSQGKIGSTEIKESVVIIMGALLRKLCLKGACDLPAVLKVKELLLAGPDSTQEESEVQMYLLALKNALLPEGIPVLAKYAESEVGAYSTIAITALQRYDPALITAEVKKALNRIYHQNQRIYEKNVRAAAADVIMSSNPSYMEVKNLLLSIGHLPHEMNKYMLSKIQDVLRFQMPAYKLVRQVMKDMISHNYDRFSKTGSSSAYSGFMAETVDVTCTYNLDILYSGSGVLRRSNMNIYGQSNNALLHGLQVTIEAQGLESLIAATPDEGEEELESFAGMSALLFDVQLRPVTFFKGYSDLMSKMFSMSGDPINVVKGLILLTDHSQVIPLQSGLRASAEFQAGLSIDISGGMEFSLWYRESKTSVNNRGALVIIGNMTVDTDFVSAGVEVGFETEATLDFITTVQFSEYPFLVCMQMDKTTFPFRETVSKQEKLPTGQMFSRKRSRDQVVPGSEFPLHQENSNMCKKVFEPAW.

An N-terminal signal peptide occupies residues 1-21 (MMPVAGLLLCVTAVLCTSALG). A Vitellogenin domain is found at 26 to 660 (LDNGKLYRYS…QSNNALLHGL (635 aa)). Residues C172 and C192 are joined by a disulfide bond. N-linked (GlcNAc...) asparagine glycosylation occurs at N348. C438 and C443 are disulfide-bonded. An N-linked (GlcNAc...) asparagine glycan is attached at N787.

In terms of assembly, heterodimer; heterodimerizes with the protein disulfide isomerase. Highest expression in the proximal part of the anterior intestine. Lower expression in the distal part of the anterior intestine, in the posterior portion of the intestinal tube and liver. Very low expression levels in heart, brain, ovary, testis and kidney.

The protein localises to the endoplasmic reticulum. Its subcellular location is the golgi apparatus. The enzyme catalyses a 1,2-diacyl-sn-glycero-3-phosphocholine(in) = a 1,2-diacyl-sn-glycero-3-phosphocholine(out). It catalyses the reaction a 1,2-diacyl-sn-glycero-3-phosphoethanolamine(in) = a 1,2-diacyl-sn-glycero-3-phosphoethanolamine(out). The catalysed reaction is a cholesterol ester(in) = a cholesterol ester(out). It carries out the reaction a triacyl-sn-glycerol(in) = a triacyl-sn-glycerol(out). Its activity is regulated as follows. Inhibited by naringenin. Its function is as follows. Catalyzes the transport of triglyceride between phospholipid surfaces. Catalyzes the transport of cholesteryl ester, and phospholipid between phospholipid surfaces. Required for the assembly and secretion of plasma lipoproteins that contain apolipoprotein B. Required for yolk lipid utilization and absorption of dietary lipids in larvae. The sequence is that of Microsomal triglyceride transfer protein large subunit from Danio rerio (Zebrafish).